Consider the following 462-residue polypeptide: Aquaporin-1 (462 aa).

Residues 1–11 (MTMRSPLTNDH) are compositionally biased toward polar residues. The tract at residues 1–24 (MTMRSPLTNDHPQPLRASPLSEHD) is disordered. Over 1–146 (MTMRSPLTND…KWMNSDWKNH (146 aa)) the chain is Cytoplasmic. A helical transmembrane segment spans residues 147 to 167 (IVAVIGELIGTSLFLFFGYAG). Residues 168–182 (IEVAKLQGREPPDLE) lie on the Extracellular side of the membrane. Residues 183–203 (VLFYISATFGASLMVTAWIFF) form a helical membrane-spanning segment. Topologically, residues 204–229 (RISGGLFNPAVTLALAILKAVSPIRA) are cytoplasmic. An NPA 1 motif is present at residues 211-213 (NPA). A helical transmembrane segment spans residues 230–250 (FLLVITQLGASCLAAILVQEI). At 251-269 (FPKQLDVATTLGSGTSMGQ) the chain is on the extracellular side. The chain crosses the membrane as a helical span at residues 270 to 290 (GFVIEAITTAALIFTIIMLAV). The Cytoplasmic portion of the chain corresponds to 291-296 (EKHKAT). Residues 297 to 317 (FVAPIGIGLALFVAHMVAVPF) traverse the membrane as a helical segment. Residues 318-341 (TGASLNPARSFGPSAIVWNFPREH) are Extracellular-facing. Positions 323 to 325 (NPA) match the NPA 2 motif. The chain crosses the membrane as a helical span at residues 342 to 362 (WIYWVGPILGAGLAVLFFRLI). Over 363–462 (KLMEYEMANP…WRRQQYRNVV (100 aa)) the chain is Cytoplasmic. The segment at 407–433 (GKSWYRDDSSSGSMRRKESVNSFTGGR) is disordered. Positions 410 to 425 (WYRDDSSSGSMRRKES) are enriched in basic and acidic residues.

Belongs to the MIP/aquaporin (TC 1.A.8) family.

It localises to the membrane. The enzyme catalyses H2O(in) = H2O(out). In terms of biological role, water channel required to facilitate the transport of water across membranes. Involved in conidiation. This chain is Aquaporin-1, found in Botryotinia fuckeliana (strain B05.10) (Noble rot fungus).